We begin with the raw amino-acid sequence, 562 residues long: NAD-dependent histone deacetylase SIR2 (562 aa).

Residues 1-67 (MTIPHMKYAV…RETNTTDPLG (67 aa)) are disordered. Polar residues predominate over residues 11–25 (SKTSENKVSNTVSPT). A compositionally biased stretch (basic and acidic residues) spans 26 to 36 (QDKDAIRKQPD). A Deacetylase sirtuin-type domain is found at 237-527 (RLSNFFTIDH…AMVAQKCGWT (291 aa)). Residues 262 to 281 (GAGV…EGFY) and 344 to 347 (QNID) each bind NAD(+). His364 acts as the Proton acceptor in catalysis. 4 residues coordinate Zn(2+): Cys372, Cys375, Cys396, and Cys399. Residues 471 to 473 (GTS), 496 to 498 (NRD), and Cys513 each bind NAD(+).

This sequence belongs to the sirtuin family. Class I subfamily. Homomultimer. Forms a complex with SIR3 and SIR4. Component of the RENT complex, at least composed of SIR2, CDC14 and NET1. The RENT complex interacts with FOB1. Interacts with ESC8. Interacts with and ZDS2. Interacts with MCM10. Interacts with SLX5. Interacts with NSI1. Requires Zn(2+) as cofactor.

The protein localises to the nucleus. It is found in the nucleolus. The catalysed reaction is N(6)-acetyl-L-lysyl-[protein] + NAD(+) + H2O = 2''-O-acetyl-ADP-D-ribose + nicotinamide + L-lysyl-[protein]. Its activity is increased by calorie restriction, which slows the pace of aging and increases maximum lifespan. Activated by resveratrol (3,5,4'-trihydroxy-trans-stilbene), which is found in red wine. Functionally, NAD-dependent deacetylase, which participates in a wide range of cellular events including chromosome silencing, chromosome segregation, DNA recombination and the determination of life span. Involved in transcriptional repression of the silent mating-type loci HML and HMR and telomeric silencing via its association with SIR3 and SIR4. Plays a central role in ribosomal DNA (rDNA) silencing via its association with the RENT complex, preventing hyperrecombination, and repressing transcription from foreign promoters, which contributes to extending life span. Probably represses transcription via the formation of heterochromatin structure, which involves the compaction of chromatin fiber into a more condensed form, although this complex in at least one case can still bind euchromatic levels of positive transcription regulators. Although it displays some NAD-dependent histone deacetylase activity on histone H3K9Ac and H3K14Ac and histone H4K16Ac in vitro, such activity is unclear in vivo and may not be essential. This is NAD-dependent histone deacetylase SIR2 (SIR2) from Saccharomyces cerevisiae (strain ATCC 204508 / S288c) (Baker's yeast).